Reading from the N-terminus, the 669-residue chain is MSYGYDDESKRKRRYIVITISSVLLISMVVAVTVGVSLNKHDGDSKGKAEVNASVKAVKDVCAPTDYRKTCEDTLIKNGKNTTDPMELVKTAFNVTMKQITDAAKKSQTIMELQKDSRTRMALDQCKELMDYALDELSNSFEELGKFEFHLLDEALINLRIWLSAAISHEETCLEGFQGTQGNAGETMKKALKTAIELTHNGLAIISEMSNFVGQMQIPGLNSRRLLAEGFPSWVDQRGRKLLQAAAAYSDVKPDIVVAQDGSGQYKTINEALQFVPKKRNTTFVVHIKAGLYKEYVQVNKTMSHLVFIGDGPDKTIISGNKNYKDGITTYRTATVAIVGNYFIAKNIGFENTAGAIKHQAVAVRVQSDESIFFNCRFDGYQDTLYTHSHRQFFRDCTISGTIDFLFGDAAAVFQNCTLLVRKPLPNQACPITAHGRKDPRESTGFVFQGCTIAGEPDYLAVKETSKAYLGRPWKEYSRTIIMNTFIPDFVQPQGWQPWLGDFGLKTLFYSEVQNTGPGSALANRVTWAGIKTLSEEDILKFTPAQYIQGDDWIPGKGVPYTTGLLAGNPAAATTTPSVSAAAPGFSTFTDTSGADSIAPTASPAASPESSISMAYTGTASPESSIKVSSSTETASPESSFTEASTASPESSIMVASTESSGSFFSMFT.

The chain crosses the membrane as a helical span at residues 16–36 (IVITISSVLLISMVVAVTVGV). Residues Asn52, Asn81, Asn94, Asn281, and Asn300 are each glycosylated (N-linked (GlcNAc...) asparagine). Residues 52–205 (NASVKAVKDV…IELTHNGLAI (154 aa)) form a pectinesterase inhibitor 21 region. Positions 255–551 (DIVVAQDGSG…FTPAQYIQGD (297 aa)) are pectinesterase 21. Positions 330 and 360 each coordinate substrate. The active-site Proton donor; for pectinesterase activity is the Asp383. A disulfide bond links Cys397 and Cys417. The active-site Nucleophile; for pectinesterase activity is Asp404. N-linked (GlcNAc...) asparagine glycosylation is present at Asn416. Substrate is bound by residues Arg472 and Trp474. The tract at residues 615–669 (AYTGTASPESSIKVSSSTETASPESSFTEASTASPESSIMVASTESSGSFFSMFT) is disordered. Residues 616–628 (YTGTASPESSIKV) show a composition bias toward polar residues. The segment covering 629–652 (SSSTETASPESSFTEASTASPESS) has biased composition (low complexity). The segment covering 654 to 669 (MVASTESSGSFFSMFT) has biased composition (polar residues).

It in the N-terminal section; belongs to the PMEI family. The protein in the C-terminal section; belongs to the pectinesterase family. As to expression, expressed in flower buds.

It localises to the membrane. It carries out the reaction [(1-&gt;4)-alpha-D-galacturonosyl methyl ester](n) + n H2O = [(1-&gt;4)-alpha-D-galacturonosyl](n) + n methanol + n H(+). The protein operates within glycan metabolism; pectin degradation; 2-dehydro-3-deoxy-D-gluconate from pectin: step 1/5. In terms of biological role, acts in the modification of cell walls via demethylesterification of cell wall pectin. The protein is Probable pectinesterase/pectinesterase inhibitor 21 (PME21) of Arabidopsis thaliana (Mouse-ear cress).